Consider the following 515-residue polypeptide: Maturase K (515 aa).

It belongs to the intron maturase 2 family. MatK subfamily.

Its subcellular location is the plastid. It localises to the chloroplast. Usually encoded in the trnK tRNA gene intron. Probably assists in splicing its own and other chloroplast group II introns. The chain is Maturase K from Pinus elliottii (Slash pine).